A 189-amino-acid polypeptide reads, in one-letter code: Interferon alpha-12 (189 aa).

Positions 1–23 (MARLCAFLMTLLVMSYWSTCSLG) are cleaved as a signal peptide. Cystine bridges form between C24-C122 and C52-C162. The N-linked (GlcNAc...) asparagine glycan is linked to N101.

The protein belongs to the alpha/beta interferon family.

Its subcellular location is the secreted. Produced by macrophages, IFN-alpha have antiviral activities. Interferon stimulates the production of two enzymes: a protein kinase and an oligoadenylate synthetase. The chain is Interferon alpha-12 (Ifna12) from Mus musculus (Mouse).